The sequence spans 831 residues: DNA ligase (831 aa).

NAD(+)-binding positions include 34-38 (DADYD), 83-84 (SL), and Glu-114. The active-site N6-AMP-lysine intermediate is the Lys-116. Residues Arg-137, Glu-174, Lys-291, and Lys-315 each contribute to the NAD(+) site. Residues Cys-409, Cys-412, Cys-427, and Cys-433 each contribute to the Zn(2+) site. Residues 749-831 (AHTAPLNGQS…LDFLEQYSAQ (83 aa)) enclose the BRCT domain.

Belongs to the NAD-dependent DNA ligase family. LigA subfamily. It depends on Mg(2+) as a cofactor. Requires Mn(2+) as cofactor.

The enzyme catalyses NAD(+) + (deoxyribonucleotide)n-3'-hydroxyl + 5'-phospho-(deoxyribonucleotide)m = (deoxyribonucleotide)n+m + AMP + beta-nicotinamide D-nucleotide.. Its function is as follows. DNA ligase that catalyzes the formation of phosphodiester linkages between 5'-phosphoryl and 3'-hydroxyl groups in double-stranded DNA using NAD as a coenzyme and as the energy source for the reaction. It is essential for DNA replication and repair of damaged DNA. This Xylella fastidiosa (strain M12) protein is DNA ligase.